The following is a 291-amino-acid chain: E3 ubiquitin-protein ligase MARCHF8 (291 aa).

Residues 22–72 are disordered; that stretch reads YRSKTKEKEREEQNEKTLGHFMSHSSNISKAGSPPSASAPAPVSSFSRTSI. The segment covering 25–39 has biased composition (basic and acidic residues); that stretch reads KTKEKEREEQNEKTL. The span at 50 to 72 shows a compositional bias: low complexity; it reads SKAGSPPSASAPAPVSSFSRTSI. The segment at 72-133 adopts an RING-CH-type zinc-finger fold; that stretch reads ITPSSQDICR…ELCKYEFIME (62 aa). Zn(2+)-binding residues include Cys80, Cys83, Cys97, Cys99, His107, Cys110, Cys123, and Cys126. 2 helical membrane passes run 157 to 177 and 197 to 217; these read CSVTFHVIAITCVVWSLYVLI and FWTKLVVVAIGFTGGLLFMYV. Position 253 is a phosphoserine (Ser253).

In terms of assembly, interacts with CD86. As to expression, broadly expressed. Present in immature dendritic cells (at protein level).

The protein localises to the golgi apparatus membrane. It localises to the endoplasmic reticulum membrane. The protein resides in the cytoplasmic vesicle membrane. Its subcellular location is the lysosome membrane. It is found in the early endosome membrane. It carries out the reaction S-ubiquitinyl-[E2 ubiquitin-conjugating enzyme]-L-cysteine + [acceptor protein]-L-lysine = [E2 ubiquitin-conjugating enzyme]-L-cysteine + N(6)-ubiquitinyl-[acceptor protein]-L-lysine.. The protein operates within protein modification; protein ubiquitination. In terms of biological role, E3 ubiquitin-protein ligase that plays several important roles in innate immunity and adaptive immunity. Mediates ubiquitination of CD86 and MHC class II proteins, such as HLA-DR alpha and beta, and promotes their subsequent endocytosis and sorting to lysosomes via multivesicular bodies. Possesses a very broad antiviral activity by specifically inactivating different viral fusion proteins. Targets and ubiquitinates cytoplasmic lysine residues of viral envelope glycoproteins with single transmembrane domains leading to their lysosomal degradation. Therefore, shows broad-spectrum inhibition against many viruses including retroviruses, rhabdoviruses, arenaviruses, sarbecoviruses or influenzaviruses. Strongly blocks human immunodeficiency virus type 1 envelope glycoprotein incorporation into virions by down-regulating its cell surface expression. Also blocks ebola virus glycoprotein/GP incorporation via surface down-regulation. Mediates 'Lys-63'-linked polyubiquitination of influenza M2 to target it to lysosome for degradation. Mediates the regulation of constitutive ubiquitination and trafficking of the viral restriction factor BST2 within the endocytic pathway. Plays a role in maintenance of immune tolerance to self by promoting the turnover and proteasomal degradation of PD-L1/CD274 via ubiquitination. Catalyzes the 'Lys-63'-linked polyubiquitylation of cGAS thereby inhibiting its DNA binding ability and impairing its antiviral innate immunity. Negatively regulates IL7-mediated T-cell homeostasis by mediating 'Lys-27'-linked polyubiquitination of IL7R, leading to its lysosomal degradation. Functionally, (Microbial infection) Mediates 'Lys-63'-linked polyubiquitination of hepatitis C virus/HCV protein NS2 which allows its binding to HGS, an ESCRT-0 complex component, and this interaction is essential for HCV envelopment. The sequence is that of E3 ubiquitin-protein ligase MARCHF8 from Homo sapiens (Human).